The primary structure comprises 272 residues: uncharacterized protein (272 aa).

This is an uncharacterized protein from Bacillus subtilis (strain 168).